The chain runs to 184 residues: Casparian strip membrane protein 3 (184 aa).

At M1 to G22 the chain is on the cytoplasmic side. The chain crosses the membrane as a helical span at residues L23–I43. Over A44–T72 the chain is Extracellular. N-linked (GlcNAc...) asparagine glycosylation is present at N49. Residues F73–I93 form a helical membrane-spanning segment. Residues V94 to R105 are Cytoplasmic-facing. The helical transmembrane segment at L106–G126 threads the bilayer. The Extracellular portion of the chain corresponds to A127 to S159. A glycan (N-linked (GlcNAc...) asparagine) is linked at N137. The helical transmembrane segment at L160–A180 threads the bilayer. Topologically, residues L181–R184 are cytoplasmic.

This sequence belongs to the Casparian strip membrane proteins (CASP) family. Homodimer and heterodimers.

The protein resides in the cell membrane. Functionally, regulates membrane-cell wall junctions and localized cell wall deposition. Required for establishment of the Casparian strip membrane domain (CSD) and the subsequent formation of Casparian strips, a cell wall modification of the root endodermis that determines an apoplastic barrier between the intraorganismal apoplasm and the extraorganismal apoplasm and prevents lateral diffusion. The chain is Casparian strip membrane protein 3 from Brachypodium distachyon (Purple false brome).